A 111-amino-acid polypeptide reads, in one-letter code: Ferredoxin, 2Fe-2S (111 aa).

Residues Cys-10, Cys-23, Cys-56, and Cys-60 each coordinate [2Fe-2S] cluster.

As to quaternary structure, homodimer in solution. Requires [2Fe-2S] cluster as cofactor.

Functionally, ferredoxins are iron-sulfur proteins that transfer electrons in a wide variety of metabolic reactions. The chain is Ferredoxin, 2Fe-2S (fdx4) from Aquifex aeolicus (strain VF5).